Reading from the N-terminus, the 905-residue chain is Alanine--tRNA ligase (905 aa).

Histidine 595, histidine 599, cysteine 696, and histidine 700 together coordinate Zn(2+).

It belongs to the class-II aminoacyl-tRNA synthetase family. Zn(2+) serves as cofactor.

The protein resides in the cytoplasm. It carries out the reaction tRNA(Ala) + L-alanine + ATP = L-alanyl-tRNA(Ala) + AMP + diphosphate. In terms of biological role, catalyzes the attachment of alanine to tRNA(Ala) in a two-step reaction: alanine is first activated by ATP to form Ala-AMP and then transferred to the acceptor end of tRNA(Ala). Also edits incorrectly charged Ser-tRNA(Ala) and Gly-tRNA(Ala) via its editing domain. The sequence is that of Alanine--tRNA ligase from Anaeromyxobacter dehalogenans (strain 2CP-C).